A 283-amino-acid polypeptide reads, in one-letter code: Homeobox protein BarH-like 2 (283 aa).

2 disordered regions span residues 107 to 141 (AAAA…RRSR) and 198 to 283 (KGGQ…PPLS). Residues 122–132 (SSESETEQPTP) are compositionally biased toward polar residues. Positions 139–198 (RSRTIFTELQLMGLEKKFQKQKYLSTPDRLDLAQSLGLTQLQVKTWYQNRRMKWKKMVLK) form a DNA-binding region, homeobox. The segment covering 268-277 (QPQELSEASS) has biased composition (low complexity).

It belongs to the BAR homeobox family. As to expression, nervous system, particularly in the telencephalon, spinal cord, and dorsal root ganglia.

Its subcellular location is the nucleus. In terms of biological role, transcription factor. Binds optimally to the DNA consensus sequence 5'-YYTAATGRTTTTY-3'. May control the expression of neural adhesion molecules such as L1 or Ng-CAM during embryonic development of both the central and peripherical nervous system. May be involved in controlling adhesive processes in keratinizing epithelia. In Mus musculus (Mouse), this protein is Homeobox protein BarH-like 2 (Barx2).